Consider the following 152-residue polypeptide: Large ribosomal subunit protein bL9 (152 aa).

It belongs to the bacterial ribosomal protein bL9 family.

In terms of biological role, binds to the 23S rRNA. In Prochlorococcus marinus (strain NATL2A), this protein is Large ribosomal subunit protein bL9.